The following is a 177-amino-acid chain: Large ribosomal subunit protein uL6 (177 aa).

The protein belongs to the universal ribosomal protein uL6 family. As to quaternary structure, part of the 50S ribosomal subunit.

Its function is as follows. This protein binds to the 23S rRNA, and is important in its secondary structure. It is located near the subunit interface in the base of the L7/L12 stalk, and near the tRNA binding site of the peptidyltransferase center. This is Large ribosomal subunit protein uL6 from Rhizobium etli (strain ATCC 51251 / DSM 11541 / JCM 21823 / NBRC 15573 / CFN 42).